The following is a 1923-amino-acid chain: Nuclear pore complex protein GP210 (1923 aa).

A signal peptide spans 1–22 (MVPVSFCFFFLLLLLSAGESSS). Residues Asn-73, Asn-117, Asn-289, Asn-609, Asn-863, Asn-903, Asn-967, Asn-982, Asn-1171, Asn-1199, Asn-1550, Asn-1568, and Asn-1743 are each glycosylated (N-linked (GlcNAc...) asparagine). In terms of domain architecture, BIG2 spans 1152–1205 (IFLVPGASYVLTIEGGPTMNVSVDYTTVDNEVAKIEKSGRLYATSPGNTTIYAT). The helical transmembrane segment at 1829–1849 (SVLLKILWGVLVLVVSVIILM) threads the bilayer.

It belongs to the NUP210 family. In terms of assembly, part of the nuclear pore complex (NPC). The NPC has an eight-fold symmetrical structure comprising a central transport channel and two rings, the cytoplasmic and nuclear rings, to which eight filaments are attached. The cytoplasmic filaments have loose ends, while the nuclear filaments are joined in a distal ring, forming a nuclear basket. NPCs are highly dynamic in configuration and composition, and can be devided in 3 subcomplexes, the NUP62 subcomplex, the NUP107-160 subcomplex and the NUP93 subcomplex, containing approximately 30 different nucleoporin proteins.

It localises to the nucleus envelope. Its subcellular location is the nucleus membrane. The protein localises to the nucleus. It is found in the nuclear pore complex. This chain is Nuclear pore complex protein GP210, found in Arabidopsis thaliana (Mouse-ear cress).